The chain runs to 265 residues: Oxidoreductase nsrR (265 aa).

It belongs to the avfA family.

It participates in secondary metabolite biosynthesis. Its function is as follows. Oxidoreductase; part of the gene cluster that mediates the biosynthesis of the tetrahydroxanthone dimer neosartorin, which exhibits antibacterial activity. The two different monomeric units appear to be synthesized by the same set of enzymes, among which the Baeyer-Villiger monooxygenase nsrF is the key enzyme for the divergence of the biosynthetic routes. The pathway begins with the synthesis of atrochrysone thioester by the polyketide synthase nsrB. The atrochrysone carboxyl ACP thioesterase nsrC then breaks the thioester bond and releases the atrochrysone carboxylic acid from AacuL. Atrochrysone carboxylic acid is decarboxylated by the decarboxylase nsrE, and oxidized by the anthrone oxygenase nsrD to yield emodin. Emodin is then reduced to emodin hydroquinone by the oxidoreductase nsrR. A-ring reduction by the short chain dehydrogenase nsrJ, dehydration by the scytalone dehydratase-like protein nsrI and probable spontaneous re-oxidation, results in overall deoxygenation to chrysophanol. The Baeyer-Villiger monooxygenase nsrF accepts chrysophanol as a substrate to insert one oxygen atom at two different positions to yield the precursors of both monomric units. NsrF is promiscuous/flexible in interacting with the 2 (non methylated and methylated) aromatic rings of chrysophanol, thus diverging the biosynthetic pathway at this point. After the hydrolysis of the lactones, methylesterification by the methyltransferase nsrG yields respectively moniliphenone and 2,2',6'-trihydroxy-4-methyl-6-methoxya-cyldiphenylmethanone. The next steps are the hydroxylation by the FAD-dependent monooxygenase nsrK, followed by isomerization by the monooxygenase nsrQ. The short chain dehydrogenase/reductase nsrO then catalyzes the C-5 ketoreduction to give the xanthone skeleton of blennolide C and 5-acetylblennolide A. The acetyltransferase nsrL has a strict substrate specificity and uses only blennolide A but not blennolide C to yield 5-acetylblennolide A as the single-acetylated product. In the final step of the biosynthesis, the heterodimerization of the 2 xanthones, blennolide C and 5-acetylblennolide A, is catalyzed by the cytochrome P450 monooxygenase nsrP. NsrP can utilize at least three different xanthones as its substrates to perform the dimerization reaction. The protein is Oxidoreductase nsrR of Aspergillus novofumigatus (strain IBT 16806).